The following is an 889-amino-acid chain: DNA mismatch repair protein MutS (889 aa).

Positions 1–17 (MPKTNSSAASTNANPSS) are enriched in low complexity. Positions 1-20 (MPKTNSSAASTNANPSSLQQ) are disordered. 640–647 (GPNMGGKS) provides a ligand contact to ATP.

It belongs to the DNA mismatch repair MutS family.

In terms of biological role, this protein is involved in the repair of mismatches in DNA. It is possible that it carries out the mismatch recognition step. This protein has a weak ATPase activity. This Pseudoalteromonas atlantica (strain T6c / ATCC BAA-1087) protein is DNA mismatch repair protein MutS.